A 309-amino-acid chain; its full sequence is Homoserine O-succinyltransferase (309 aa).

Cysteine 142 functions as the Acyl-thioester intermediate in the catalytic mechanism. Positions 163 and 192 each coordinate substrate. The active-site Proton acceptor is histidine 235. Residue glutamate 237 is part of the active site. Residue arginine 249 participates in substrate binding.

It belongs to the MetA family. Homodimer.

The protein resides in the cytoplasm. The enzyme catalyses L-homoserine + succinyl-CoA = O-succinyl-L-homoserine + CoA. The protein operates within amino-acid biosynthesis; L-methionine biosynthesis via de novo pathway; O-succinyl-L-homoserine from L-homoserine: step 1/1. Transfers a succinyl group from succinyl-CoA to L-homoserine, forming succinyl-L-homoserine. The polypeptide is Homoserine O-succinyltransferase (Escherichia coli (strain SE11)).